The chain runs to 449 residues: MDLRPELPTVSSASQVHPGAAAAAAAASIPVSMAGNLLRGPPLLLRAADKYPRTPKCARCRNHGVVSALKGHKRYCRWKDCMCAKCTLIAERQRVMAAQVALRRQQAQEENEARELQLLYGTAEGLALAAANGIIPPRPNYEVFGSVNSESNSESSIQKYELFPKTQLSGSTTTQKSVGKPASTESDSAPGMSSPDGRHGGGSGSENGDSESFINSPVSKPLKDGEETPGSVSSLGSDSGSETDKEEQEPSPSSAASRHMNAIDILTRVFPSHKRSVLELVLQGCGKDVVQAIEQILNNSGAQAPNKAGPEETWTAERMLQSAQQPPAGSATAATTTRPMLPGAMTLSNRSAFSPLQPNAPHFGADPGTYPLGTHLGLNPLRLAYSAHSRGLAFMTPYSTTGLMPTLGFRPPMDYAFSDLIRDRTMLHKEQGYASGLYGPLVNNTPDKQ.

A DNA-binding region (DM) is located at residues 57–104 (CARCRNHGVVSALKGHKRYCRWKDCMCAKCTLIAERQRVMAAQVALRR). Residues 163–259 (FPKTQLSGST…PSPSSAASRH (97 aa)) form a disordered region. Over residues 166 to 187 (TQLSGSTTTQKSVGKPASTESD) the composition is skewed to polar residues. Low complexity predominate over residues 230-240 (GSVSSLGSDSG). Positions 260–295 (MNAIDILTRVFPSHKRSVLELVLQGCGKDVVQAIEQ) constitute a DMA domain.

This sequence belongs to the DMRT family. In terms of tissue distribution, expressed in brain and eye.

Its subcellular location is the nucleus. Functionally, may be involved in sexual development. In Xiphophorus maculatus (Southern platyfish), this protein is Doublesex- and mab-3-related transcription factor A2 (dmrta2).